Reading from the N-terminus, the 336-residue chain is Biotin synthase (336 aa).

In terms of domain architecture, Radical SAM core spans Val-48–Arg-277. 3 residues coordinate [4Fe-4S] cluster: Cys-66, Cys-70, and Cys-73. Positions 110, 142, 202, and 272 each coordinate [2Fe-2S] cluster.

The protein belongs to the radical SAM superfamily. Biotin synthase family. As to quaternary structure, homodimer. It depends on [4Fe-4S] cluster as a cofactor. [2Fe-2S] cluster is required as a cofactor.

The catalysed reaction is (4R,5S)-dethiobiotin + (sulfur carrier)-SH + 2 reduced [2Fe-2S]-[ferredoxin] + 2 S-adenosyl-L-methionine = (sulfur carrier)-H + biotin + 2 5'-deoxyadenosine + 2 L-methionine + 2 oxidized [2Fe-2S]-[ferredoxin]. It participates in cofactor biosynthesis; biotin biosynthesis; biotin from 7,8-diaminononanoate: step 2/2. In terms of biological role, catalyzes the conversion of dethiobiotin (DTB) to biotin by the insertion of a sulfur atom into dethiobiotin via a radical-based mechanism. The protein is Biotin synthase of Persephonella marina (strain DSM 14350 / EX-H1).